The chain runs to 1310 residues: Cadherin-related family member 2 (1310 aa).

An N-terminal signal peptide occupies residues 1 to 20 (MAQLWLSCFLLPALVVSVAA). Residues 21–1154 (NVAPKFLANM…ESDLSKQLIS (1134 aa)) are Extracellular-facing. Cadherin domains follow at residues 27 to 124 (LANM…APVF), 125 to 241 (QNTA…DPQF), and 242 to 353 (VREF…KPEF). Asn29, Asn134, Asn182, Asn188, Asn195, Asn300, Asn355, Asn371, Asn401, Asn460, Asn565, Asn600, Asn616, Asn632, Asn680, Asn696, Asn701, Asn775, Asn821, Asn871, Asn877, Asn911, Asn932, and Asn1107 each carry an N-linked (GlcNAc...) asparagine glycan. Cadherin domains follow at residues 368 to 480 (AQVN…RPTF), 481 to 586 (PQSL…APVV), 586 to 695 (VSGS…LPIF), 696 to 808 (NQSS…PPTL), 810 to 928 (VASL…APYF), and 930 to 1058 (PENK…TPKE). The chain crosses the membrane as a helical span at residues 1155–1175 (VIIGLGVALLLVLVIMTMAFV). At 1176–1310 (CVRKSYNRKL…TNAGLDTTDL (135 aa)) the chain is on the cytoplasmic side. The segment at 1180–1310 (SYNRKLQAMK…TNAGLDTTDL (131 aa)) is mediates interaction with USH1C and MYO7B and is required for proper localization to microvilli tips and function in microvilli organization. Ser1248 is subject to Phosphoserine. Basic and acidic residues predominate over residues 1259 to 1268 (NSQEIKEHRP). Residues 1259–1310 (NSQEIKEHRPPHTPPEPDPEPLSVVLLGRQAGASGQLEGPSYTNAGLDTTDL) form a disordered region. Ser1299 bears the Phosphoserine mark. Over residues 1299–1310 (SYTNAGLDTTDL) the composition is skewed to polar residues.

In terms of assembly, part of the IMAC/intermicrovillar adhesion complex/intermicrovillar tip-link complex composed of ANKS4B, MYO7B, USH1C, CDHR2 and CDHR5. Interacts with MAST2. Interacts (via cytoplasmic domain) with USH1C and MYO7B; required for proper localization of CDHR2 to microvilli tips and its function in brush border differentiation. Highly expressed in liver, kidney and colon. Moderately expressed in small intestine. Down-regulated in a number of liver and colon cancers. Expressed in duodenum with higher expression in enterocytes along the villus axis and lower expression in crypts (at protein level).

It localises to the apical cell membrane. The protein localises to the cell projection. The protein resides in the microvillus membrane. It is found in the cell junction. Its function is as follows. Intermicrovillar adhesion molecule that forms, via its extracellular domain, calcium-dependent heterophilic complexes with CDHR5 on adjacent microvilli. Thereby, controls the packing of microvilli at the apical membrane of epithelial cells. Through its cytoplasmic domain, interacts with microvillus cytoplasmic proteins to form the intermicrovillar adhesion complex/IMAC. This complex plays a central role in microvilli and epithelial brush border differentiation. May also play a role in cell-cell adhesion and contact inhibition in epithelial cells. This Homo sapiens (Human) protein is Cadherin-related family member 2.